The following is a 286-amino-acid chain: MGLAGTKVKQRFGLDPRNTSWSNDKSRFGHRYLESMGWAPGKGLGLVEHATTTHVKVSVKDDTVGLGAKLAKRSGTDDLETDSSGLDDFQRILGRLNGRGREVDEALEQKRKDNIINGKWGMHFIKGEVLCSTWDRKSKSHMLKTALEDESEVNFKSSKKRRQSGSEPSRDSTSHAKRMRGDESKKSTRDQSKQERKEKKIKTEKKEKKEKKEKKEKKEKKEKKEKKEKKEKKERDYGNRASPVEPRKHDQISNVGRLSARAKYIKQKRASVMDAKALNEIFMISK.

A disordered region spans residues 1–20 (MGLAGTKVKQRFGLDPRNTS). In terms of domain architecture, G-patch spans 25 to 71 (KSRFGHRYLESMGWAPGKGLGLVEHATTTHVKVSVKDDTVGLGAKLA). Residues 148-255 (EDESEVNFKS…PRKHDQISNV (108 aa)) are disordered. The segment covering 168-198 (PSRDSTSHAKRMRGDESKKSTRDQSKQERKE) has biased composition (basic and acidic residues). Positions 199–230 (KKIKTEKKEKKEKKEKKEKKEKKEKKEKKEKK) are enriched in basic residues.

It belongs to the PINX1 family.

It localises to the nucleus. Its subcellular location is the nucleolus. In terms of biological role, involved in rRNA-processing at A0, A1 and A2 sites and negatively regulates telomerase. This chain is Protein PXR1 (PXR1), found in Meyerozyma guilliermondii (strain ATCC 6260 / CBS 566 / DSM 6381 / JCM 1539 / NBRC 10279 / NRRL Y-324) (Yeast).